A 72-amino-acid chain; its full sequence is Translation initiation factor IF-1 (72 aa).

The region spanning 1–72 is the S1-like domain; that stretch reads MSKNDVIEVE…TRGRIVYRFK (72 aa).

It belongs to the IF-1 family. Component of the 30S ribosomal translation pre-initiation complex which assembles on the 30S ribosome in the order IF-2 and IF-3, IF-1 and N-formylmethionyl-tRNA(fMet); mRNA recruitment can occur at any time during PIC assembly.

The protein localises to the cytoplasm. Functionally, one of the essential components for the initiation of protein synthesis. Stabilizes the binding of IF-2 and IF-3 on the 30S subunit to which N-formylmethionyl-tRNA(fMet) subsequently binds. Helps modulate mRNA selection, yielding the 30S pre-initiation complex (PIC). Upon addition of the 50S ribosomal subunit IF-1, IF-2 and IF-3 are released leaving the mature 70S translation initiation complex. In Desulforamulus reducens (strain ATCC BAA-1160 / DSM 100696 / MI-1) (Desulfotomaculum reducens), this protein is Translation initiation factor IF-1.